Reading from the N-terminus, the 130-residue chain is Large ribosomal subunit protein bL12 (130 aa).

The protein belongs to the bacterial ribosomal protein bL12 family. As to quaternary structure, homodimer. Part of the ribosomal stalk of the 50S ribosomal subunit. Forms a multimeric L10(L12)X complex, where L10 forms an elongated spine to which 2 to 4 L12 dimers bind in a sequential fashion. Binds GTP-bound translation factors.

Its function is as follows. Forms part of the ribosomal stalk which helps the ribosome interact with GTP-bound translation factors. Is thus essential for accurate translation. The sequence is that of Large ribosomal subunit protein bL12 from Parafrankia sp. (strain EAN1pec).